Here is a 404-residue protein sequence, read N- to C-terminus: S-adenosylmethionine synthase (404 aa).

His18 is a binding site for ATP. Mg(2+) is bound at residue Asp20. Glu46 is a K(+) binding site. Residues Glu59 and Gln102 each coordinate L-methionine. The flexible loop stretch occupies residues Gln102–His112. Residues Asp178 to Lys180, Lys249 to Phe250, Asp258, Arg264 to Lys265, Ala281, and Lys285 contribute to the ATP site. Asp258 provides a ligand contact to L-methionine. Lys289 is a binding site for L-methionine.

Belongs to the AdoMet synthase family. Homotetramer; dimer of dimers. Requires Mg(2+) as cofactor. K(+) serves as cofactor.

The protein resides in the cytoplasm. It catalyses the reaction L-methionine + ATP + H2O = S-adenosyl-L-methionine + phosphate + diphosphate. Its pathway is amino-acid biosynthesis; S-adenosyl-L-methionine biosynthesis; S-adenosyl-L-methionine from L-methionine: step 1/1. Functionally, catalyzes the formation of S-adenosylmethionine (AdoMet) from methionine and ATP. The overall synthetic reaction is composed of two sequential steps, AdoMet formation and the subsequent tripolyphosphate hydrolysis which occurs prior to release of AdoMet from the enzyme. The polypeptide is S-adenosylmethionine synthase (Rhodococcus opacus (strain B4)).